A 290-amino-acid chain; its full sequence is MAPKRQSPLPPQKKKPRPPPALGPEETSASAGLPKKGEKEQQEAIEHIDEVQNEIDRLNEQASEEILKVEQKYNKLRQPFFQKRSELIAKIPNFWVTTFVNHPQVSALLGEEDEEALHYLTRVEVTEFEDIKSGYRIDFYFDENPYFENKVLSKEFHLNESGDPSSKSTEIKWKSGKDLTKRSSQTQNKASRKRQHEEPESFFTWFTDHSDAGADELGEVIKDDIWPNPLQYYLVPDMDDEEGEGEEDDDDDEEEEGLEDIDEEGDEDEGEEDEDDDEGEEGEEDEGEDD.

The disordered stretch occupies residues 1-45; it reads MAPKRQSPLPPQKKKPRPPPALGPEETSASAGLPKKGEKEQQEAI. Ala2 carries the n,N,N-trimethylalanine modification. Position 7 is a phosphoserine (Ser7). N6-acetyllysine is present on Pro11. Lys15, Pro24, and Ser28 each carry phosphoserine. The dimerization stretch occupies residues 31-78; it reads AGLPKKGEKEQQEAIEHIDEVQNEIDRLNEQASEEILKVEQKYNKLRQ. Positions 35–45 are enriched in basic and acidic residues; the sequence is KKGEKEQQEAI. Ser63 carries the post-translational modification Phosphoserine. Lys68 bears the N6-acetyllysine mark. The segment at 79 to 225 is earmuff domain; the sequence is PFFQKRSELI…ELGEVIKDDI (147 aa). Tyr146 bears the Phosphotyrosine mark. Lys150 is subject to N6-acetyllysine. Lys154 participates in a covalent cross-link: Glycyl lysine isopeptide (Lys-Gly) (interchain with G-Cter in ubiquitin). Disordered stretches follow at residues 158–207 and 236–290; these read LNES…TWFT and PDMD…GEDD. A compositionally biased stretch (basic and acidic residues) spans 169 to 181; sequence TEIKWKSGKDLTK. The residue at position 172 (Lys172) is an N6-acetyllysine. Residues 237–290 are compositionally biased toward acidic residues; it reads DMDDEEGEGEEDDDDDEEEEGLEDIDEEGDEDEGEEDEDDDEGEEGEEDEGEDD.

The protein belongs to the nucleosome assembly protein (NAP) family. As to quaternary structure, headphone-shaped homodimer. Isoforms 1 and 2 interact directly with each other and with ANP32A within the tripartite INHAT (inhibitor of acetyltransferases) complex. Isoform 1 and isoform 2 interact also with histones. Isoform 2 is a component of the SET complex, composed of at least ANP32A, APEX1, HMGB2, NME1, SET and TREX1, but not NME2 or TREX2. Within this complex, directly interacts with ANP32A, NME1, HMGB2 and TREX1; the interaction with ANP32A is enhanced after cleavage. Interacts with APBB1, CHTOP, SETBP1, SGO1. In terms of assembly, (Microbial infection) Interacts with herpes simplex virus 1 VP22. In terms of processing, isoform 2 is phosphorylated on Ser-15 and Ser-24. Post-translationally, isoform 2 is acetylated on Lys-11. Some glutamate residues are glycylated by TTLL8. This modification occurs exclusively on glutamate residues and results in a glycine chain on the gamma-carboxyl group. In terms of processing, N-terminus of isoform 1 is methylated by METTL11A/NTM1. Mainly trimethylated. Post-translationally, cleaved after Lys-176 by GZMA. The cleavage inhibits its nucleosome assembly activity and disrupts the inhibition on NME1. In terms of tissue distribution, widely expressed. Low levels in quiescent cells during serum starvation, contact inhibition or differentiation. Highly expressed in Wilms' tumor.

It localises to the cytoplasm. The protein localises to the cytosol. It is found in the endoplasmic reticulum. The protein resides in the nucleus. Its subcellular location is the nucleoplasm. Its function is as follows. Multitasking protein, involved in apoptosis, transcription, nucleosome assembly and histone chaperoning. Isoform 2 anti-apoptotic activity is mediated by inhibition of the GZMA-activated DNase, NME1. In the course of cytotoxic T-lymphocyte (CTL)-induced apoptosis, GZMA cleaves SET, disrupting its binding to NME1 and releasing NME1 inhibition. Isoform 1 and isoform 2 are potent inhibitors of protein phosphatase 2A. Isoform 1 and isoform 2 inhibit EP300/CREBBP and PCAF-mediated acetylation of histones (HAT) and nucleosomes, most probably by masking the accessibility of lysines of histones to the acetylases. The predominant target for inhibition is histone H4. HAT inhibition leads to silencing of HAT-dependent transcription and prevents active demethylation of DNA. Both isoforms stimulate DNA replication of the adenovirus genome complexed with viral core proteins; however, isoform 2 specific activity is higher. This is Protein SET (SET) from Homo sapiens (Human).